Reading from the N-terminus, the 138-residue chain is Large ribosomal subunit protein uL16 (138 aa).

Positions 1–19 (MLIPRKVKHRKQHHPKKKG) are enriched in basic residues. The tract at residues 1–24 (MLIPRKVKHRKQHHPKKKGTASGG) is disordered.

The protein belongs to the universal ribosomal protein uL16 family. Part of the 50S ribosomal subunit.

Binds 23S rRNA and is also seen to make contacts with the A and possibly P site tRNAs. The polypeptide is Large ribosomal subunit protein uL16 (Mycobacteroides abscessus (strain ATCC 19977 / DSM 44196 / CCUG 20993 / CIP 104536 / JCM 13569 / NCTC 13031 / TMC 1543 / L948) (Mycobacterium abscessus)).